We begin with the raw amino-acid sequence, 757 residues long: Elongation factor G, mitochondrial (757 aa).

Residues 1–41 constitute a mitochondrion transit peptide; the sequence is MLERAALLHRLRLPAHSLPFIYNGALFGGAKRSFSATSKRC. The tr-type G domain maps to 66 to 347; the sequence is KLLRNIGVSA…AIVDYLPEPS (282 aa). Residues 75–82, 146–150, and 200–203 each bind GTP; these read AHIDSGKT, DTPGH, and NKMD.

Belongs to the TRAFAC class translation factor GTPase superfamily. Classic translation factor GTPase family. EF-G/EF-2 subfamily.

Its subcellular location is the mitochondrion. The protein operates within protein biosynthesis; polypeptide chain elongation. Mitochondrial GTPase that catalyzes the GTP-dependent ribosomal translocation step during translation elongation. During this step, the ribosome changes from the pre-translocational (PRE) to the post-translocational (POST) state as the newly formed A-site-bound peptidyl-tRNA and P-site-bound deacylated tRNA move to the P and E sites, respectively. Catalyzes the coordinated movement of the two tRNA molecules, the mRNA and conformational changes in the ribosome. The protein is Elongation factor G, mitochondrial of Eremothecium gossypii (strain ATCC 10895 / CBS 109.51 / FGSC 9923 / NRRL Y-1056) (Yeast).